A 539-amino-acid polypeptide reads, in one-letter code: Phosphoenolpyruvate carboxykinase (ATP) (539 aa).

Substrate is bound by residues Arg-64, Tyr-206, and Lys-212. Residues Lys-212, His-231, and 247–255 (GLSGTGKTT) each bind ATP. Residues Lys-212 and His-231 each contribute to the Mn(2+) site. Asp-268 serves as a coordination point for Mn(2+). ATP-binding positions include Glu-296, Arg-332, 448–449 (RI), and Thr-454. A substrate-binding site is contributed by Arg-332.

The protein belongs to the phosphoenolpyruvate carboxykinase (ATP) family. In terms of assembly, monomer. Requires Mn(2+) as cofactor.

The protein localises to the cytoplasm. It catalyses the reaction oxaloacetate + ATP = phosphoenolpyruvate + ADP + CO2. The protein operates within carbohydrate biosynthesis; gluconeogenesis. Functionally, involved in the gluconeogenesis. Catalyzes the conversion of oxaloacetate (OAA) to phosphoenolpyruvate (PEP) through direct phosphoryl transfer between the nucleoside triphosphate and OAA. The chain is Phosphoenolpyruvate carboxykinase (ATP) from Pectobacterium atrosepticum (strain SCRI 1043 / ATCC BAA-672) (Erwinia carotovora subsp. atroseptica).